The chain runs to 440 residues: Transposon Ty1-LR2 Gag polyprotein (440 aa).

Composition is skewed to polar residues over residues M1 to S23, T48 to S60, and Q127 to F152. 3 disordered regions span residues M1–Q93, P126–M174, and G352–Y440. Residues T153–T165 show a composition bias toward low complexity. The interval N299 to H401 is RNA-binding. Positions N402–S418 are enriched in low complexity. The residue at position 416 (S416) is a Phosphoserine. Over residues K419–N428 the composition is skewed to polar residues. Basic and acidic residues predominate over residues N429 to Y440.

As to quaternary structure, homotrimer.

The protein resides in the cytoplasm. Functionally, capsid protein (CA) is the structural component of the virus-like particle (VLP), forming the shell that encapsulates the retrotransposons dimeric RNA genome. The particles are assembled from trimer-clustered units and there are holes in the capsid shells that allow for the diffusion of macromolecules. CA also has nucleocapsid-like chaperone activity, promoting primer tRNA(i)-Met annealing to the multipartite primer-binding site (PBS), dimerization of Ty1 RNA and initiation of reverse transcription. In Saccharomyces cerevisiae (strain ATCC 204508 / S288c) (Baker's yeast), this protein is Transposon Ty1-LR2 Gag polyprotein (TY1A-LR2).